The following is a 92-amino-acid chain: Small ribosomal subunit protein uS19c (92 aa).

Belongs to the universal ribosomal protein uS19 family.

It is found in the plastid. The protein resides in the chloroplast. Protein S19 forms a complex with S13 that binds strongly to the 16S ribosomal RNA. The protein is Small ribosomal subunit protein uS19c of Oedogonium cardiacum (Filamentous green alga).